Reading from the N-terminus, the 872-residue chain is MEEVLETMQLENMHCDVCEGTTFQEREGFYYCVECGTQKDQIRAVDITAEDNFDDTAAGRYTARTIRQKKDTEKEDEDDITSWEFYNYVLRGFLQELLNMGAKPELKLMTLQVWAAYLDSMEVAFSKSNKTGLPKLNVRALPIDARIIYNHKTFKKGKKGKKSTLTGDPNDERAKFRLWNRTKRNLDASGYRSHGGASESEGEQSLHLQWSMRARKSLKRHMPLKHLDKHSRDSKGSMSCHSLRPRVKQLHNFDRNIYCLNIIKLYVVLGIALNMVEDDIQLSDLLRFIDEEHLTKRCMLNYLPGNVAAKGKALLKDMELSKMKDKVTNKLLRVNIACMSRFINLSEYQKPNLHSLAERYILELALPPRLLKYVNSLLDLHPPTFFNAMTVHPYPRYEARTMAYILYAMKLLFGLDDLKERNISESAAKINEKLLEVGGDEAPLLFVFTEWMEFVEMRKVIVSHYNQSFARRFGVSTRTGCQVDDILAKEWKEKEQGETFGWMQGSAAMKRQHENLTHIIETMLKDHFGESSKESMEKEHIEFQPSLTPAHSYFNRILLQVSRSDGAKMKITIPDHMKVDHSARNLDPFVLETTELSQYLSQHGLKLRVEELACQEDIQNVGIFRPLTIIRGDGREYRANTEIKTETWISELKRKEKRPDFRFTQPTGTYGARYLKRITMRDARRVQLEINNPFWDVTETPSFLLKLNDNEIPLDSLSSLQTFEEGTMDPLNIPLDLPRRNLEKILNPEGSDRASDQVASDINDEPPSPETLLLQVSNFDCWLLHGYMKRIRRHDKHELRQLFPCSFRWLLETCASTIGIVWEELYEELLIVEVMYHHSIRDWSNHRNYLCIQHNTQEKDIRTLARTYKELW.

The RRN7-type zinc-finger motif lies at 6–40 (ETMQLENMHCDVCEGTTFQEREGFYYCVECGTQKD). 4 residues coordinate Zn(2+): Cys15, Cys18, Cys32, and Cys35. The tract at residues 41-72 (QIRAVDITAEDNFDDTAAGRYTARTIRQKKDT) is B-reader. The B-linker stretch occupies residues 73 to 84 (EKEDEDDITSWE). Positions 85 to 312 (FYNYVLRGFL…LPGNVAAKGK (228 aa)) are N-terminal cyclin fold. The interval 187–206 (DASGYRSHGGASESEGEQSL) is disordered.

It belongs to the RRN7/TAF1B family.

Its subcellular location is the nucleus. It localises to the nucleolus. Its function is as follows. Component of RNA polymerase I core factor complex that acts as a GTF2B/TFIIB-like factor and plays a key role in multiple steps during transcription initiation such as pre-initiation complex (PIC) assembly and postpolymerase recruitment events in polymerase I (Pol I) transcription. Binds rDNA promoters and plays a role in Pol I recruitment. The protein is TATA box-binding protein-associated factor RNA polymerase I subunit B of Drosophila melanogaster (Fruit fly).